Reading from the N-terminus, the 178-residue chain is Large ribosomal subunit protein bL25 (178 aa).

This sequence belongs to the bacterial ribosomal protein bL25 family. CTC subfamily. Part of the 50S ribosomal subunit; part of the 5S rRNA/L5/L18/L25 subcomplex. Contacts the 5S rRNA. Binds to the 5S rRNA independently of L5 and L18.

This is one of the proteins that binds to the 5S RNA in the ribosome where it forms part of the central protuberance. The polypeptide is Large ribosomal subunit protein bL25 (Wolinella succinogenes (strain ATCC 29543 / DSM 1740 / CCUG 13145 / JCM 31913 / LMG 7466 / NCTC 11488 / FDC 602W) (Vibrio succinogenes)).